The primary structure comprises 679 residues: Methionine--tRNA ligase (679 aa).

The 'HIGH' region motif lies at 14–24; that stretch reads PYANGSIHLGH. Zn(2+) is bound by residues Cys-145, Cys-148, Cys-158, and Cys-161. The short motif at 331–335 is the 'KMSKS' region element; that stretch reads KMSKS. ATP is bound at residue Lys-334. One can recognise a tRNA-binding domain in the interval 577–679; the sequence is TFAAVDLRVA…SGAKPGQRIK (103 aa).

It belongs to the class-I aminoacyl-tRNA synthetase family. MetG type 1 subfamily. In terms of assembly, homodimer. Zn(2+) is required as a cofactor.

The protein localises to the cytoplasm. The enzyme catalyses tRNA(Met) + L-methionine + ATP = L-methionyl-tRNA(Met) + AMP + diphosphate. Its function is as follows. Is required not only for elongation of protein synthesis but also for the initiation of all mRNA translation through initiator tRNA(fMet) aminoacylation. The sequence is that of Methionine--tRNA ligase from Pseudomonas entomophila (strain L48).